Consider the following 248-residue polypeptide: UPF0736 protein BCE33L1074 (248 aa).

Belongs to the UPF0736 family.

The protein is UPF0736 protein BCE33L1074 of Bacillus cereus (strain ZK / E33L).